Consider the following 72-residue polypeptide: SRY-related protein MG44 (72 aa).

Positions Val-1 to Lys-69 form a DNA-binding region, HMG box.

It localises to the nucleus. The chain is SRY-related protein MG44 from Tarentola mauritanica (Common wall gecko).